Reading from the N-terminus, the 445-residue chain is ATP-dependent protease ATPase subunit HslU (445 aa).

ATP is bound by residues I17, G59–E64, D254, E319, and R391.

The protein belongs to the ClpX chaperone family. HslU subfamily. In terms of assembly, a double ring-shaped homohexamer of HslV is capped on each side by a ring-shaped HslU homohexamer. The assembly of the HslU/HslV complex is dependent on binding of ATP.

Its subcellular location is the cytoplasm. Its function is as follows. ATPase subunit of a proteasome-like degradation complex; this subunit has chaperone activity. The binding of ATP and its subsequent hydrolysis by HslU are essential for unfolding of protein substrates subsequently hydrolyzed by HslV. HslU recognizes the N-terminal part of its protein substrates and unfolds these before they are guided to HslV for hydrolysis. The polypeptide is ATP-dependent protease ATPase subunit HslU (Pseudomonas fluorescens (strain SBW25)).